We begin with the raw amino-acid sequence, 336 residues long: Protein-arginine kinase (336 aa).

In terms of domain architecture, Phosphagen kinase C-terminal spans 22–245 (IVMSSRIRLA…QQIINEEMQI (224 aa)). ATP contacts are provided by residues 25-29 (SSRIR), H83, R116, 167-171 (RASVM), and 198-203 (RGIYGE).

The protein belongs to the ATP:guanido phosphotransferase family.

The catalysed reaction is L-arginyl-[protein] + ATP = N(omega)-phospho-L-arginyl-[protein] + ADP + H(+). In terms of biological role, catalyzes the specific phosphorylation of arginine residues in proteins. In Staphylococcus saprophyticus subsp. saprophyticus (strain ATCC 15305 / DSM 20229 / NCIMB 8711 / NCTC 7292 / S-41), this protein is Protein-arginine kinase.